The primary structure comprises 759 residues: MAEGEDMQTFTSIMDALVRISTSMKNMEKELLCPVCQEMYKQPLVLPCTHNVCQACAREVLGQQGYIGHGGDPSSEPTSPASTPSTRSPRLSRRTLPKPDRLDRLLKSGFGTYPGRKRGALHPQTILFPCPACQGDVELGERGLSGLFRNLTLERVVERYRQSVSVGGAILCQLCKPPPLEATKGCTECRATFCNECFKLFHPWGTQKAQHEPTLPTLSFRPKGLMCPDHKEEVTHYCKTCQRLVCQLCRVRRTHSGHKITPVLSAYQALKDKLTKSLAYILGNQDTVQTQICELEETIRHTEVSGQQAKEEVSQLVRGLGAVLEEKRASLLQAIEECQQERLSRLSAQIHEHQSLLDGSGLVGYAQEVLKETDQPCFVQAAKQLHNRIARATEALQTFRPAASSSFRHCQLDVGREMKLLTELSFLRVPEAPVIDTQRTFAYDQIFLCWRLPPHSPPAWHYTVEFRRTDVPAQPGPTRWQRREEVRGTSALLENPDTGSVYVLRVRGCNKAGYGEYSEDVHLHTPPAPVLHFFLDGRWGASRERLAISKDQRAVRSIPGLPLLLAAERLLTGCHLSVDVVLGDVAVTQGRSYWACAVDPASYLVKVGVGLESKLQESFQGAPDVISPRYDPDSGHDSGAEDAAVEALPPFAFLTIGMGKILLGSGASSNAGLTGRDGPTASCTVPLPPRLGICLDYERGRVSFLDAVSFRGLLECPLDCSGPVCPAFCFIGGGAVQLQEPVGTKPERKVTIGGFAKLD.

Residues M1 to V166 are required for proximal axon localization, axon formation and migration. The RING-type 1; degenerate zinc finger occupies C33–E59. The tract at residues I67–K98 is disordered. Low complexity predominate over residues P73–P89. Residues C172–K231 form an RING-type 2; degenerate zinc finger. A B box-type zinc finger spans residues P222 to V263. Zn(2+)-binding residues include C227, H230, C249, and H255. Residues A322 to R400 are a coiled coil. S330 is subject to Phosphoserine. Positions L370 to L427 constitute a COS domain. A required for microtubule association, proximal axon localization and axon formation region spans residues Q411–V429. Residues V429–A528 form the Fibronectin type-III domain. The B30.2/SPRY domain maps to P526–E747. S627 is modified (phosphoserine).

The protein belongs to the TRIM/RBCC family. As to quaternary structure, interacts with TUBB3 and TUBA4A. Expressed in the central nervous system, including pyramidal neurons and interneurons in the cortex and hippocampus and all neuronal cell types in the cerebral and cerebellar cortex, and in the peripheral nervous system, including the dorsal root ganglion neurons.

It is found in the cell projection. The protein localises to the axon. The protein resides in the cytoplasm. It localises to the cytoskeleton. Microtubule-associated protein that is involved in the formation of parallel microtubule bundles linked by cross-bridges in the proximal axon. Required for the uniform orientation and maintenance of the parallel microtubule fascicles, which are important for efficient cargo delivery and trafficking in axons. Thereby also required for proper axon formation, the establishment of neuronal polarity and proper neuronal migration. The sequence is that of Tripartite motif-containing protein 46 (Trim46) from Mus musculus (Mouse).